Reading from the N-terminus, the 1381-residue chain is Protein HEG homolog 1 (1381 aa).

Residues 1 to 29 form the signal peptide; the sequence is MASPRASRWPPPLLLLLLPLLLLPPAAPG. Residues 24-108 form a disordered region; it reads PPAAPGTRDP…APRGGSADAA (85 aa). The segment covering 25–37 has biased composition (pro residues); the sequence is PAAPGTRDPPPSP. Residues 30–1248 are Extracellular-facing; it reads TRDPPPSPAR…GLNCGNPYQL (1219 aa). A compositionally biased stretch (low complexity) spans 38-52; the sequence is ARRALSLAPLAGAGL. The span at 55–74 shows a compositional bias: basic and acidic residues; it reads QLERRPEREPPPTPPRERRG. Threonine 67 is a glycosylation site (O-linked (GalNAc...) threonine). Residues 93 to 105 are compositionally biased toward low complexity; sequence RGPSGRAPRGGSA. Asparagine 123, asparagine 159, asparagine 180, and asparagine 314 each carry an N-linked (GlcNAc...) asparagine glycan. Positions 301 to 316 are enriched in low complexity; sequence DLSSSSESTEKLNNST. Disordered regions lie at residues 301 to 325 and 376 to 447; these read DLSSSSESTEKLNNSTGLQSSSVSQ and PSAV…RSVA. The span at 424–444 shows a compositional bias: polar residues; it reads LASSSEVQNGSPMSQTETVSR. N-linked (GlcNAc...) asparagine glycans are attached at residues asparagine 462, asparagine 520, and asparagine 610. Residues 491-529 form a disordered region; sequence STVQSGGSHTALGDRSYSESSSTSSSESLNSSAPRGERS. The span at 508 to 522 shows a compositional bias: low complexity; the sequence is SESSSTSSSESLNSS. Disordered stretches follow at residues 612-680, 706-757, and 774-830; these read SSYD…PLPS, SDAS…PVTS, and QTAD…TLPA. A compositionally biased stretch (polar residues) spans 620–648; sequence QPSTESPVLHTSNLPSYTPTINMPNTSVV. Composition is skewed to low complexity over residues 657–680 and 706–748; these read SDSSSSSSSSSSSSSSGPPLPLPS and SDAS…PVLP. 2 stretches are compositionally biased toward polar residues: residues 774-784 and 792-809; these read QTADLKSQSTP and ESKSPSLVSLPTESTKAV. A compositionally biased stretch (low complexity) spans 810 to 825; the sequence is TTNSPLPPSLTESSTE. One can recognise an EGF-like 1 domain in the interval 985–1023; the sequence is SVNSCAVNPCLHNGECVADNTSRGYHCRCPPSWQGDDCS. Cystine bridges form between cysteine 989–cysteine 1000, cysteine 994–cysteine 1011, cysteine 1013–cysteine 1022, cysteine 1029–cysteine 1040, cysteine 1034–cysteine 1049, and cysteine 1051–cysteine 1062. In terms of domain architecture, EGF-like 2; calcium-binding spans 1025-1063; it reads DVNECLSNPCPSTAMCNNTQGSFICKCPVGYQLEKGICN. Asparagine 1137 carries N-linked (GlcNAc...) asparagine glycosylation. The helical transmembrane segment at 1249–1269 threads the bilayer; that stretch reads ITVVIAAAGGGLLLILGIALI. At 1270-1381 the chain is on the cytoplasmic side; that stretch reads VTCCRKNKND…SDESRRRDYF (112 aa). Serine 1359 carries the post-translational modification Phosphoserine.

In terms of assembly, interacts with CCM2 and KRIT1; KRIT1 markedly facilitates interaction with CCM2.

It is found in the cell membrane. The protein resides in the cell junction. Its subcellular location is the secreted. Its function is as follows. Receptor component of the CCM signaling pathway which is a crucial regulator of heart and vessel formation and integrity. May act through the stabilization of endothelial cell junctions. The protein is Protein HEG homolog 1 (HEG1) of Homo sapiens (Human).